The chain runs to 278 residues: Adenosylcobinamide-GDP ribazoletransferase (278 aa).

7 consecutive transmembrane segments (helical) span residues 31–51, 66–86, 115–135, 148–168, 187–207, 215–237, and 247–267; these read AMAL…SAVF, TLLP…GLHL, TIGA…VGAL, ILVA…GAVP, DAAL…LLDF, ALRA…RYLL, and ILGG…AMTI.

The protein belongs to the CobS family. Requires Mg(2+) as cofactor.

It localises to the cell membrane. It catalyses the reaction alpha-ribazole + adenosylcob(III)inamide-GDP = adenosylcob(III)alamin + GMP + H(+). It carries out the reaction alpha-ribazole 5'-phosphate + adenosylcob(III)inamide-GDP = adenosylcob(III)alamin 5'-phosphate + GMP + H(+). The protein operates within cofactor biosynthesis; adenosylcobalamin biosynthesis; adenosylcobalamin from cob(II)yrinate a,c-diamide: step 7/7. Functionally, joins adenosylcobinamide-GDP and alpha-ribazole to generate adenosylcobalamin (Ado-cobalamin). Also synthesizes adenosylcobalamin 5'-phosphate from adenosylcobinamide-GDP and alpha-ribazole 5'-phosphate. The sequence is that of Adenosylcobinamide-GDP ribazoletransferase from Frankia casuarinae (strain DSM 45818 / CECT 9043 / HFP020203 / CcI3).